Consider the following 187-residue polypeptide: Putative lipoprotein LppJ (187 aa).

The first 28 residues, 1-28 (MPHSTADRRLRLTRQALLAAAVVPLLAG), serve as a signal peptide directing secretion. A lipid anchor (N-palmitoyl cysteine) is attached at Cys29. Cys29 is lipidated: S-diacylglycerol cysteine.

The protein resides in the cell membrane. The polypeptide is Putative lipoprotein LppJ (lppJ) (Mycobacterium tuberculosis (strain CDC 1551 / Oshkosh)).